A 108-amino-acid polypeptide reads, in one-letter code: Protein phosphatase 1 regulatory subunit 1C (108 aa).

Residues 25–108 (AEQIRKRRPT…ASEREEKWNH (84 aa)) are disordered. Over residues 45-54 (NSPEIDEKRV) the composition is skewed to basic and acidic residues. Positions 55–73 (TNTQESQNASPKQRKQSVY) are enriched in polar residues. The segment covering 99 to 108 (ASEREEKWNH) has biased composition (basic and acidic residues).

This sequence belongs to the protein phosphatase inhibitor 1 family.

It localises to the cytoplasm. In terms of biological role, may increase cell susceptibility to TNF-induced apoptosis. The protein is Protein phosphatase 1 regulatory subunit 1C (Ppp1r1c) of Mus musculus (Mouse).